A 752-amino-acid chain; its full sequence is Phosphoribosylformylglycinamidine synthase subunit PurL (752 aa).

Residue His-58 is part of the active site. Positions 61 and 103 each coordinate ATP. Glu-105 serves as a coordination point for Mg(2+). Residues 106-109 and Arg-128 each bind substrate; that span reads SHNH. The active-site Proton acceptor is the His-107. Asp-129 lines the Mg(2+) pocket. Residue Gln-253 coordinates substrate. Asp-281 serves as a coordination point for Mg(2+). 325 to 327 provides a ligand contact to substrate; the sequence is ESQ. Asp-513 and Gly-550 together coordinate ATP. Asn-551 is a binding site for Mg(2+). Ser-553 contributes to the substrate binding site.

The protein belongs to the FGAMS family. As to quaternary structure, monomer. Part of the FGAM synthase complex composed of 1 PurL, 1 PurQ and 2 PurS subunits.

Its subcellular location is the cytoplasm. It carries out the reaction N(2)-formyl-N(1)-(5-phospho-beta-D-ribosyl)glycinamide + L-glutamine + ATP + H2O = 2-formamido-N(1)-(5-O-phospho-beta-D-ribosyl)acetamidine + L-glutamate + ADP + phosphate + H(+). It participates in purine metabolism; IMP biosynthesis via de novo pathway; 5-amino-1-(5-phospho-D-ribosyl)imidazole from N(2)-formyl-N(1)-(5-phospho-D-ribosyl)glycinamide: step 1/2. Its function is as follows. Part of the phosphoribosylformylglycinamidine synthase complex involved in the purines biosynthetic pathway. Catalyzes the ATP-dependent conversion of formylglycinamide ribonucleotide (FGAR) and glutamine to yield formylglycinamidine ribonucleotide (FGAM) and glutamate. The FGAM synthase complex is composed of three subunits. PurQ produces an ammonia molecule by converting glutamine to glutamate. PurL transfers the ammonia molecule to FGAR to form FGAM in an ATP-dependent manner. PurS interacts with PurQ and PurL and is thought to assist in the transfer of the ammonia molecule from PurQ to PurL. In Streptomyces avermitilis (strain ATCC 31267 / DSM 46492 / JCM 5070 / NBRC 14893 / NCIMB 12804 / NRRL 8165 / MA-4680), this protein is Phosphoribosylformylglycinamidine synthase subunit PurL.